A 301-amino-acid chain; its full sequence is Bifunctional protein FolD (301 aa).

NADP(+) contacts are provided by residues 169–171, Ser-194, and Ile-235; that span reads GRS.

Belongs to the tetrahydrofolate dehydrogenase/cyclohydrolase family. In terms of assembly, homodimer.

The enzyme catalyses (6R)-5,10-methylene-5,6,7,8-tetrahydrofolate + NADP(+) = (6R)-5,10-methenyltetrahydrofolate + NADPH. It catalyses the reaction (6R)-5,10-methenyltetrahydrofolate + H2O = (6R)-10-formyltetrahydrofolate + H(+). It participates in one-carbon metabolism; tetrahydrofolate interconversion. Its function is as follows. Catalyzes the oxidation of 5,10-methylenetetrahydrofolate to 5,10-methenyltetrahydrofolate and then the hydrolysis of 5,10-methenyltetrahydrofolate to 10-formyltetrahydrofolate. The polypeptide is Bifunctional protein FolD (Gloeothece citriformis (strain PCC 7424) (Cyanothece sp. (strain PCC 7424))).